A 641-amino-acid polypeptide reads, in one-letter code: EKIKICLQKQVNSSFSLHNGFGGNLYATEEKRMFELVKPKAGASVLNQSTWIGFGDSRTDKSNPNFPRSADVSVKTANKFRSLTGGSLMLSMFGPPGKVDYLYQGCGKHKVFYEGVNWSPHAAIDCYRKNWTDIKLNFQKNIYELASQSHCMSLVNALDKTIPLQATAGVAGNCNNSFLKNPALYTQKVTPPXXKCGKENLAFFTLPTQFGTYECRLHLVASCYFIYDSKEVYNKRGCDNYFQVIYDSSGKVVGGLDNRVSPYTGNSGDTPTMQCDMIQLKPGRYSVRSSPRFLLMPERSYCFDMKEKGPVTAVQSIWGKDRKSDYAVDQACLSTPGCMLIQKQKPYTGEADDHHGDQEMRELLSGLDYEARCISQSGWVNETSPFTEEYLLPPKFGRCPLAAKEESIPKIPDGLLIPTSGTDTTVTKPKSRIFGIDDLIIGLLFVAIVEAGIGGYLLGSRKESGGGVTKESAEKGFEKIGNDIQILRSSTNIAIEKLNDRISHDEQAIRDLTLEIENARSEALLGELGIIRALLVGNISIGLQESLWELASEITNRAGDLAVEISPGCWIIDNNICDQSCQNFIFKFNETAPVPTIPPLDTKIDLQSDPFYWGSSLGLAITAAISLAALVISGIAICRTK.

The tract at residues 1–26 is fusion domain-1; the sequence is EKIKICLQKQVNSSFSLHNGFGGNLY. The Extracellular segment spans residues 1-616; the sequence is EKIKICLQKQ…QSDPFYWGSS (616 aa). 7 cysteine pairs are disulfide-bonded: C6–C569, C106–C151, C126–C174, C196–C238, C215–C302, C223–C275, and C332–C338. N-linked (GlcNAc...) asparagine; by host glycans are attached at residues N12 and N47. An esterase domain-1 region spans residues 27-137; that stretch reads ATEEKRMFEL…RKNWTDIKLN (111 aa). The active-site Nucleophile is S57. N130 is a glycosylation site (N-linked (GlcNAc...) asparagine; by host). Positions 137–296 are N-acetyl-9-O-acetylneuraminic acid binding; the sequence is NFQKNIYELA…VRSSPRFLLM (160 aa). The segment at 297–351 is esterase domain-2; that stretch reads PERSYCFDMKEKGPVTAVQSIWGKDRKSDYAVDQACLSTPGCMLIQKQKPYTGEA. Active-site charge relay system residues include D352 and H355. The fusion domain-2 stretch occupies residues 352–637; that stretch reads DDHHGDQEMR…AALVISGIAI (286 aa). Residue N381 is glycosylated (N-linked (GlcNAc...) asparagine; by host). Residues 617-637 traverse the membrane as a helical segment; that stretch reads LGLAITAAISLAALVISGIAI. The Cytoplasmic segment spans residues 638–641; the sequence is CRTK.

The protein belongs to the influenza type C/coronaviruses hemagglutinin-esterase family. In terms of assembly, homotrimer of disulfide-linked HEF1-HEF2. In terms of processing, in natural infection, inactive HEF is matured into HEF1 and HEF2 outside the cell by one or more trypsin-like, arginine-specific endoprotease.

The protein resides in the virion membrane. The protein localises to the host cell membrane. It catalyses the reaction N-acetyl-9-O-acetylneuraminate + H2O = N-acetylneuraminate + acetate + H(+). The enzyme catalyses N-acetyl-4-O-acetylneuraminate + H2O = N-acetylneuraminate + acetate + H(+). Functionally, binds to the N-acetyl-9-O-acetylneuraminic acid residues on the cell surface, bringing about the attachment of the virus particle to the cell. Plays a major role in the determination of host range restriction and virulence. Class I viral fusion protein. Responsible for penetration of the virus into the cell cytoplasm by mediating the fusion of the membrane of the endocytosed virus particle with the endosomal membrane. Low pH in endosomes induce an irreversible conformational change in HEF2, releasing the fusion hydrophobic peptide. Several trimers are required to form a competent fusion pore. Displays a receptor-destroying activity which is a neuraminidate-O-acetyl esterase. This activity cleaves off any receptor on the cell surface, which would otherwise prevent virions release. These cleavages prevent self-aggregation and ensure the efficient spread of the progeny virus from cell to cell. This Influenza C virus (strain C/Kyoto/41/1982) protein is Hemagglutinin-esterase-fusion glycoprotein (HE).